A 268-amino-acid polypeptide reads, in one-letter code: Phosphatidylglycerol--prolipoprotein diacylglyceryl transferase (268 aa).

The next 4 helical transmembrane spans lie at 14–34 (LGPIKIHWYGLMYLLGIFAGW), 57–77 (LTFYVALGVILGGRIGYIIFY), 90–110 (FFLWDGGMSFHGGFIGVLIAF), and 117–137 (IGANFFDLGEFVAPVIPIGLG). An a 1,2-diacyl-sn-glycero-3-phospho-(1'-sn-glycerol)-binding site is contributed by arginine 140. 3 consecutive transmembrane segments (helical) span residues 174 to 194 (QLFEFFFEGVVLFSVLWLVTI), 200 to 220 (YLVLGLFMFLYGCARFICEFF), and 240 to 260 (ILSIPMILLGAVILIAVFIKI).

Belongs to the Lgt family.

It localises to the cell inner membrane. The catalysed reaction is L-cysteinyl-[prolipoprotein] + a 1,2-diacyl-sn-glycero-3-phospho-(1'-sn-glycerol) = an S-1,2-diacyl-sn-glyceryl-L-cysteinyl-[prolipoprotein] + sn-glycerol 1-phosphate + H(+). The protein operates within protein modification; lipoprotein biosynthesis (diacylglyceryl transfer). Catalyzes the transfer of the diacylglyceryl group from phosphatidylglycerol to the sulfhydryl group of the N-terminal cysteine of a prolipoprotein, the first step in the formation of mature lipoproteins. This Francisella tularensis subsp. tularensis (strain FSC 198) protein is Phosphatidylglycerol--prolipoprotein diacylglyceryl transferase.